The primary structure comprises 215 residues: Large ribosomal subunit protein uL4c (215 aa).

Over residues 48–57 the composition is skewed to polar residues; it reads SQRQGTISTK. The interval 48–85 is disordered; the sequence is SQRQGTISTKTRSEVRGGGRKPWRQKGTGRARAGSSRS. The span at 65 to 76 shows a compositional bias: basic residues; sequence GGRKPWRQKGTG.

This sequence belongs to the universal ribosomal protein uL4 family. As to quaternary structure, part of the 50S ribosomal subunit.

Its subcellular location is the plastid. It localises to the chloroplast. Functionally, probably binds the 23S rRNA. This is Large ribosomal subunit protein uL4c (rpl4) from Trieres chinensis (Marine centric diatom).